The sequence spans 356 residues: Tungsten-containing aldehyde ferredoxin oxidoreductase cofactor-modifying protein (356 aa).

Positions 1-214 (MKYLYLEITS…PIVNELYKIA (214 aa)) constitute a Radical SAM core domain. [4Fe-4S] cluster contacts are provided by C12, C16, and C19.

This sequence belongs to the radical SAM superfamily. Requires [4Fe-4S] cluster as cofactor.

In terms of biological role, involved in the biosynthesis of a molybdopterin-based tungsten cofactor. The sequence is that of Tungsten-containing aldehyde ferredoxin oxidoreductase cofactor-modifying protein (cmo) from Pyrococcus furiosus (strain ATCC 43587 / DSM 3638 / JCM 8422 / Vc1).